An 866-amino-acid chain; its full sequence is Potassium voltage-gated channel subfamily KQT member 3 (866 aa).

The interval 1–42 (MGLKARRPAGAAGGGGDGGGGGGGAANPAGGDAAAAGDEERK) is disordered. The Cytoplasmic segment spans residues 1–120 (MGLKARRPAG…IYDALERPRG (120 aa)). Residues 11–25 (AAGGGGDGGGGGGGA) are compositionally biased toward gly residues. Low complexity predominate over residues 26-36 (ANPAGGDAAAA). Threonine 81 is modified (phosphothreonine). A helical membrane pass occupies residues 121 to 143 (WALLYHALVFLIVLGCLILAVLT). At 144–153 (TFREYETVSG) the chain is on the extracellular side. Residues 154-175 (DWLLLLETFAIFIFGAEFALRI) traverse the membrane as a helical segment. Residues 176 to 193 (WAAGCCCRYKGWRGRLKF) lie on the Cytoplasmic side of the membrane. A helical transmembrane segment spans residues 194-213 (ARKPLCMLDIFVLIASVPVV). Residues 214 to 225 (AVGNQGNVLATS) lie on the Extracellular side of the membrane. The helical; Voltage-sensor transmembrane segment at 226–244 (LRSLRFLQILRMLRMDRRG) threads the bilayer. Residue arginine 243 participates in a 1,2-diacyl-sn-glycero-3-phospho-(1D-myo-inositol-4,5-bisphosphate) binding. The Cytoplasmic portion of the chain corresponds to 245–256 (GTWKLLGSAICA). A helical transmembrane segment spans residues 257-282 (HSKELITAWYIGFLTLILSSFLVYLV). An a 1,2-diacyl-sn-glycero-3-phospho-(1D-myo-inositol-4,5-bisphosphate)-binding site is contributed by lysine 259. Over 283–302 (EKDVPEVDAQGEEMKEEFET) the chain is Extracellular. The pore-forming intramembrane region spans 303–315 (YADALWWGLITLA). The Selectivity filter motif lies at 316 to 321 (TIGYGD). Topologically, residues 316 to 326 (TIGYGDKTPKT) are extracellular. Residues 327–353 (WEGRLIAATFSLIGVSFFALPAGILGS) traverse the membrane as a helical segment. Over 354–866 (GLALKVQEQH…SIWTPSGKPT (513 aa)) the chain is Cytoplasmic. Residues 356 to 537 (ALKVQEQHRQ…RLYKKKFKET (182 aa)) form a mediates interaction with calmodulin region. Residue lysine 366 participates in a 1,2-diacyl-sn-glycero-3-phospho-(1D-myo-inositol-4,5-bisphosphate) binding. 3 disordered regions span residues 574–617 (PGPP…EDQS), 656–676 (GFSPSKGASSPAEAEQKEDRR), and 757–866 (QVEL…GKPT). Polar residues predominate over residues 837 to 866 (EPFTPSGSLPLSSTGDGISDSIWTPSGKPT).

It belongs to the potassium channel family. KQT (TC 1.A.1.15) subfamily. Kv7.3/KCNQ3 sub-subfamily. In terms of assembly, heterotetramer with KCNQ2; forms heterotetrameric native M-channel responsible for the M-current. Interacts with calmodulin; the interaction is calcium-independent, constitutive and participates in the proper assembly of a functional M-channel. Heteromultimer with KCNQ5. May associate with KCNE2. Interacts with IQCJ-SCHIP1. Interacts (via the pore module) with SLC5A3/SMIT1; forms a coregulatory complex that alters ion selectivity, voltage dependence and gating kinetics of the channel. In terms of processing, KCNQ2/KCNQ3 are ubiquitinated by NEDD4L. Ubiquitination leads to protein degradation. Degradation induced by NEDD4L is inhibited by USP36.

It is found in the cell membrane. The catalysed reaction is K(+)(in) = K(+)(out). It carries out the reaction Rb(+)(in) = Rb(+)(out). The enzyme catalyses Cs(+)(in) = Cs(+)(out). It catalyses the reaction Na(+)(in) = Na(+)(out). Its activity is regulated as follows. Phosphatidylinositol-4,5-bisphosphate (PIP2) potentiates the activation of KCNQ channels by enhancing the electro-mechanical coupling of the voltage-sensing domain (VSD) and the pore-forming domain (PD). In the closed state of the channel, PIP2 is anchored at the S2-S3 loop; upon channel activation, PIP2 interacts with the S4-S5 linker and is involved in channel gating. Calcium suppresses KCNQ2-KCNQ3 channel currents, with calcium-bound calmodulin inducing a change in channel configuration which leads to the reduction of channel affinity for PIP2 and subsequent current suppression. In terms of biological role, pore-forming subunit of the voltage-gated potassium (Kv) M-channel which is responsible for the M-current, a key controller of neuronal excitability. M-channel is composed of pore-forming subunits KCNQ2 and KCNQ3 assembled as heterotetramers. The native M-current has a slowly activating and deactivating potassium conductance which plays a critical role in determining the subthreshold electrical excitability of neurons as well as the responsiveness to synaptic inputs. M-channel is selectively permeable in vitro to other cations besides potassium, in decreasing order of affinity K(+) &gt; Rb(+) &gt; Cs(+) &gt; Na(+). M-channel association with SLC5A3/SMIT1 alters channel ion selectivity, increasing Na(+) and Cs(+) permeation relative to K(+). Suppressed by activation of M1 muscarinic acetylcholine receptors. KCNQ3 also associates with KCNQ5 to form a functional channel in vitro and may also contribute to the M-current in brain. The protein is Potassium voltage-gated channel subfamily KQT member 3 of Bos taurus (Bovine).